Consider the following 302-residue polypeptide: RING-H2 finger protein ATL38 (302 aa).

A helical membrane pass occupies residues 15–35; the sequence is LLVITIILFAIFIVGLASVCF. The RING-type; atypical zinc finger occupies 96–138; sequence CAVCICEFEDHETLRLMPECCHVFHADCVSVWLSDHSTCPLCR. Positions 279-302 are disordered; it reads GEAVAPSKDSRRISVEQSQLDDRV. Residues 286–302 show a composition bias toward basic and acidic residues; that stretch reads KDSRRISVEQSQLDDRV.

This sequence belongs to the RING-type zinc finger family. ATL subfamily.

Its subcellular location is the membrane. The catalysed reaction is S-ubiquitinyl-[E2 ubiquitin-conjugating enzyme]-L-cysteine + [acceptor protein]-L-lysine = [E2 ubiquitin-conjugating enzyme]-L-cysteine + N(6)-ubiquitinyl-[acceptor protein]-L-lysine.. It participates in protein modification; protein ubiquitination. The polypeptide is RING-H2 finger protein ATL38 (ATL38) (Arabidopsis thaliana (Mouse-ear cress)).